A 197-amino-acid chain; its full sequence is Thymidylate kinase (197 aa).

ATP is bound at residue 7–14 (GIDGSGKS).

It belongs to the thymidylate kinase family.

The enzyme catalyses dTMP + ATP = dTDP + ADP. Its function is as follows. Phosphorylation of dTMP to form dTDP in both de novo and salvage pathways of dTTP synthesis. This Thermotoga sp. (strain RQ2) protein is Thymidylate kinase.